The primary structure comprises 429 residues: Serine hydroxymethyltransferase (429 aa).

(6S)-5,6,7,8-tetrahydrofolate contacts are provided by residues leucine 126 and 130–132; that span reads GHL. Residue lysine 235 is modified to N6-(pyridoxal phosphate)lysine. Position 359–361 (359–361) interacts with (6S)-5,6,7,8-tetrahydrofolate; that stretch reads SPF.

The protein belongs to the SHMT family. As to quaternary structure, homodimer. The cofactor is pyridoxal 5'-phosphate.

It is found in the cytoplasm. It catalyses the reaction (6R)-5,10-methylene-5,6,7,8-tetrahydrofolate + glycine + H2O = (6S)-5,6,7,8-tetrahydrofolate + L-serine. Its pathway is one-carbon metabolism; tetrahydrofolate interconversion. The protein operates within amino-acid biosynthesis; glycine biosynthesis; glycine from L-serine: step 1/1. In terms of biological role, catalyzes the reversible interconversion of serine and glycine with tetrahydrofolate (THF) serving as the one-carbon carrier. This reaction serves as the major source of one-carbon groups required for the biosynthesis of purines, thymidylate, methionine, and other important biomolecules. Also exhibits THF-independent aldolase activity toward beta-hydroxyamino acids, producing glycine and aldehydes, via a retro-aldol mechanism. The polypeptide is Serine hydroxymethyltransferase (Synechococcus sp. (strain WH7803)).